Here is a 294-residue protein sequence, read N- to C-terminus: GDP-6-deoxy-D-talose 4-dehydrogenase (294 aa).

NAD(+) contacts are provided by residues 11–12 (FI), 38–39 (DL), 60–64 (LAALT), Thr104, Tyr128, Lys132, and Phe154. 2 residues coordinate substrate: Thr104 and Tyr128. The Proton acceptor role is filled by Tyr128. Residues Asn155 and Arg190 each contribute to the substrate site.

Belongs to the NAD(P)-dependent epimerase/dehydratase family.

The catalysed reaction is GDP-6-deoxy-alpha-D-talose + NAD(+) = GDP-4-dehydro-alpha-D-rhamnose + NADH + H(+). It catalyses the reaction GDP-6-deoxy-alpha-D-talose + NADP(+) = GDP-4-dehydro-alpha-D-rhamnose + NADPH + H(+). Its pathway is bacterial outer membrane biogenesis; LPS O-antigen biosynthesis. Functionally, catalyzes the conversion of GDP-4-dehydro-6-deoxy-D-mannose to GDP-6-deoxy-D-talose. In Aggregatibacter actinomycetemcomitans (Actinobacillus actinomycetemcomitans), this protein is GDP-6-deoxy-D-talose 4-dehydrogenase (tld).